The sequence spans 502 residues: Activin receptor type-1-like (502 aa).

The N-terminal stretch at 1–22 (MTLGSFRRGLLMLSVAFGLTRG) is a signal peptide. Residues 23–119 (DLAKPSKLVN…EEPEVDAHLP (97 aa)) lie on the Extracellular side of the membrane. Residue Asn-32 is glycosylated (N-linked (GlcNAc...) asparagine). 3 disulfide bridges follow: Cys-33–Cys-50, Cys-35–Cys-40, and Cys-45–Cys-68. The interval 72–75 (NQEL) is mediates specificity for BMP ligand. 2 cysteine pairs are disulfide-bonded: Cys-76–Cys-88 and Cys-89–Cys-94. Asn-97 carries an N-linked (GlcNAc...) asparagine glycan. The helical transmembrane segment at 120–140 (LILGPVLALPVLVALGALGLW) threads the bilayer. Residues 141 to 502 (RVRRRQEKQR…HNPEKPKVIH (362 aa)) lie on the Cytoplasmic side of the membrane. Ser-154, Ser-159, and Ser-160 each carry phosphoserine. A GS domain is found at 171–200 (SMLGDFLDSDCTTGSGSGLPFLVQRTVARQ). The region spanning 201-502 (VALVECVGKG…HNPEKPKVIH (302 aa)) is the Protein kinase domain. ATP contacts are provided by residues 207–215 (VGKGRYGEV) and Lys-228. Asp-329 acts as the Proton acceptor in catalysis.

Belongs to the protein kinase superfamily. TKL Ser/Thr protein kinase family. TGFB receptor subfamily. As to quaternary structure, interacts with TSC22D1/TSC-22. Requires Mg(2+) as cofactor. It depends on Mn(2+) as a cofactor.

The protein localises to the cell membrane. It catalyses the reaction L-threonyl-[receptor-protein] + ATP = O-phospho-L-threonyl-[receptor-protein] + ADP + H(+). It carries out the reaction L-seryl-[receptor-protein] + ATP = O-phospho-L-seryl-[receptor-protein] + ADP + H(+). In terms of biological role, type I receptor for TGF-beta family ligands BMP9/GDF2 and BMP10 and important regulator of normal blood vessel development. On ligand binding, forms a receptor complex consisting of two type II and two type I transmembrane serine/threonine kinases. Type II receptors phosphorylate and activate type I receptors which autophosphorylate, then bind and activate SMAD transcriptional regulators. May bind activin as well. This Mus musculus (Mouse) protein is Activin receptor type-1-like (Acvrl1).